The primary structure comprises 1031 residues: Protein translocase subunit SecA (1031 aa).

ATP-binding positions include glutamine 143, 161–165 (GEGKT), and aspartate 662. The Zn(2+) site is built by cysteine 1015, cysteine 1017, cysteine 1026, and cysteine 1027.

This sequence belongs to the SecA family. Monomer and homodimer. Part of the essential Sec protein translocation apparatus which comprises SecA, SecYEG and auxiliary proteins SecDF. Other proteins may also be involved. The cofactor is Zn(2+).

Its subcellular location is the cell inner membrane. The protein resides in the cytoplasm. It carries out the reaction ATP + H2O + cellular proteinSide 1 = ADP + phosphate + cellular proteinSide 2.. Part of the Sec protein translocase complex. Interacts with the SecYEG preprotein conducting channel. Has a central role in coupling the hydrolysis of ATP to the transfer of proteins into and across the cell membrane, serving as an ATP-driven molecular motor driving the stepwise translocation of polypeptide chains across the membrane. The sequence is that of Protein translocase subunit SecA from Chlorobaculum tepidum (strain ATCC 49652 / DSM 12025 / NBRC 103806 / TLS) (Chlorobium tepidum).